The sequence spans 337 residues: N-acetyl-gamma-glutamyl-phosphate reductase (337 aa).

Cys155 is an active-site residue.

It belongs to the NAGSA dehydrogenase family. Type 1 subfamily.

Its subcellular location is the cytoplasm. The catalysed reaction is N-acetyl-L-glutamate 5-semialdehyde + phosphate + NADP(+) = N-acetyl-L-glutamyl 5-phosphate + NADPH + H(+). It participates in amino-acid biosynthesis; L-arginine biosynthesis; N(2)-acetyl-L-ornithine from L-glutamate: step 3/4. In terms of biological role, catalyzes the NADPH-dependent reduction of N-acetyl-5-glutamyl phosphate to yield N-acetyl-L-glutamate 5-semialdehyde. The polypeptide is N-acetyl-gamma-glutamyl-phosphate reductase (Alteromonas mediterranea (strain DSM 17117 / CIP 110805 / LMG 28347 / Deep ecotype)).